The sequence spans 136 residues: uncharacterized protein (136 aa).

Residues 1–35 (MTHRAVPCQPRAFSKIKVLVISFLFLMVAFLPFSS) form the signal peptide.

This is an uncharacterized protein from Saccharomyces cerevisiae (strain ATCC 204508 / S288c) (Baker's yeast).